The chain runs to 284 residues: Shikimate dehydrogenase (NADP(+)) (284 aa).

Shikimate is bound by residues 20-22 (SIS) and Ser-67. Lys-71 acts as the Proton acceptor in catalysis. An NADP(+)-binding site is contributed by Asp-83. Asn-92 and Asp-107 together coordinate shikimate. NADP(+) contacts are provided by residues 129 to 133 (GAGGA) and Ile-227. Tyr-229 serves as a coordination point for shikimate. Gly-250 is a binding site for NADP(+).

The protein belongs to the shikimate dehydrogenase family. As to quaternary structure, homodimer.

The enzyme catalyses shikimate + NADP(+) = 3-dehydroshikimate + NADPH + H(+). Its pathway is metabolic intermediate biosynthesis; chorismate biosynthesis; chorismate from D-erythrose 4-phosphate and phosphoenolpyruvate: step 4/7. Its function is as follows. Involved in the biosynthesis of the chorismate, which leads to the biosynthesis of aromatic amino acids. Catalyzes the reversible NADPH linked reduction of 3-dehydroshikimate (DHSA) to yield shikimate (SA). The sequence is that of Shikimate dehydrogenase (NADP(+)) from Streptococcus pneumoniae (strain JJA).